The primary structure comprises 38 residues: Photosystem II reaction center protein L (38 aa).

Residues 17–37 form a helical membrane-spanning segment; it reads SLYWGLLLIFVLAVSFSNYFF.

Belongs to the PsbL family. In terms of assembly, PSII is composed of 1 copy each of membrane proteins PsbA, PsbB, PsbC, PsbD, PsbE, PsbF, PsbH, PsbI, PsbJ, PsbK, PsbL, PsbM, PsbT, PsbX, PsbY, PsbZ, Psb30/Ycf12, at least 3 peripheral proteins of the oxygen-evolving complex and a large number of cofactors. It forms dimeric complexes.

Its subcellular location is the plastid. The protein localises to the chloroplast thylakoid membrane. In terms of biological role, one of the components of the core complex of photosystem II (PSII). PSII is a light-driven water:plastoquinone oxidoreductase that uses light energy to abstract electrons from H(2)O, generating O(2) and a proton gradient subsequently used for ATP formation. It consists of a core antenna complex that captures photons, and an electron transfer chain that converts photonic excitation into a charge separation. This subunit is found at the monomer-monomer interface and is required for correct PSII assembly and/or dimerization. This chain is Photosystem II reaction center protein L, found in Amborella trichopoda.